A 345-amino-acid chain; its full sequence is OVARIAN TUMOR DOMAIN-containing deubiquitinating enzyme 9 (345 aa).

One can recognise an OTU domain in the interval 204 to 328; the sequence is LVENKIEGDG…EVHYNSIYPE (125 aa). The active site involves aspartate 212. Catalysis depends on cysteine 215, which acts as the Nucleophile. Histidine 321 is a catalytic residue.

The protein belongs to the peptidase C85 family.

The enzyme catalyses Thiol-dependent hydrolysis of ester, thioester, amide, peptide and isopeptide bonds formed by the C-terminal Gly of ubiquitin (a 76-residue protein attached to proteins as an intracellular targeting signal).. Functionally, hydrolase that can remove conjugated ubiquitin from proteins in vitro and may therefore play an important regulatory role at the level of protein turnover by preventing degradation. Cysteine protease with a preference for 'Lys-63' and 'Lys-48' -linked ubiquitin (UB) tetramers as substrates. Also cleaves RUB-GST fusion. The protein is OVARIAN TUMOR DOMAIN-containing deubiquitinating enzyme 9 of Arabidopsis thaliana (Mouse-ear cress).